The primary structure comprises 100 residues: MPDGGRDTELLIEDEVREPRMFRVLLHNDDYTTMEFVVSILIEVFRRTPDEATRIMLAVHEKGVGECGVYTAEVAETKVALVHARARREGYPLRCTLEEV.

This sequence belongs to the ClpS family. In terms of assembly, binds to the N-terminal domain of the chaperone ClpA.

Its function is as follows. Involved in the modulation of the specificity of the ClpAP-mediated ATP-dependent protein degradation. The chain is ATP-dependent Clp protease adapter protein ClpS from Nitratidesulfovibrio vulgaris (strain DSM 19637 / Miyazaki F) (Desulfovibrio vulgaris).